Reading from the N-terminus, the 673-residue chain is UvrABC system protein B (673 aa).

Residues 26-183 form the Helicase ATP-binding domain; that stretch reads EGLEDGLAHQ…RRLAELQYTR (158 aa). Position 39-46 (39-46) interacts with ATP; that stretch reads GVTGSGKT. Residues 92–115 carry the Beta-hairpin motif; the sequence is YYDYYQPEAYVPSSDTFIEKDASV. The region spanning 431–597 is the Helicase C-terminal domain; that stretch reads QVDDLLSEIR…GLNKKVVDIL (167 aa). The UVR domain occupies 633–668; that stretch reads QQKIHELEGQMMQHAQNLEFEEAAEIRDQLHQLREL.

It belongs to the UvrB family. In terms of assembly, forms a heterotetramer with UvrA during the search for lesions. Interacts with UvrC in an incision complex.

The protein resides in the cytoplasm. Its function is as follows. The UvrABC repair system catalyzes the recognition and processing of DNA lesions. A damage recognition complex composed of 2 UvrA and 2 UvrB subunits scans DNA for abnormalities. Upon binding of the UvrA(2)B(2) complex to a putative damaged site, the DNA wraps around one UvrB monomer. DNA wrap is dependent on ATP binding by UvrB and probably causes local melting of the DNA helix, facilitating insertion of UvrB beta-hairpin between the DNA strands. Then UvrB probes one DNA strand for the presence of a lesion. If a lesion is found the UvrA subunits dissociate and the UvrB-DNA preincision complex is formed. This complex is subsequently bound by UvrC and the second UvrB is released. If no lesion is found, the DNA wraps around the other UvrB subunit that will check the other stand for damage. In Citrobacter koseri (strain ATCC BAA-895 / CDC 4225-83 / SGSC4696), this protein is UvrABC system protein B.